We begin with the raw amino-acid sequence, 557 residues long: Hepatocyte nuclear factor 1-beta (557 aa).

The segment at 1–31 (MVSKLTSLQQELLSALLSSGVTKEVLVQALE) is dimerization. In terms of domain architecture, HNF-p1 spans 1-32 (MVSKLTSLQQELLSALLSSGVTKEVLVQALEE). A phosphoserine mark is found at S49, S52, S75, and S80. Residues 64-85 (TLTNGHAKGRLSGDEGSEDGDD) are disordered. A POU-specific atypical domain is found at 93 to 188 (KELQALNTEE…ILRQFNQTVQ (96 aa)). Residues 231-311 (MRRNRFKWGP…NRRKEEAFRQ (81 aa)) constitute a DNA-binding region (homeobox; HNF1-type). Residues 324 to 370 (HSLNPLLSHGSPHHQPSSSPPNKLSGVRYSQQGNNEVTSSSTISHHG) are disordered. Positions 328 to 344 (PLLSHGSPHHQPSSSPP) are enriched in low complexity. Over residues 351–370 (RYSQQGNNEVTSSSTISHHG) the composition is skewed to polar residues.

It belongs to the HNF1 homeobox family. In terms of assembly, binds DNA as a dimer. Can form homodimer or heterodimer with HNF1-alpha. Interacts (via HNF-p1 domain) with PCBD1; the interaction increases its transactivation activity.

The protein resides in the nucleus. Its function is as follows. Transcription factor that binds to the inverted palindrome 5'-GTTAATNATTAAC-3'. Binds to the FPC element in the cAMP regulatory unit of the PLAU gene. Transcriptional activity is increased by coactivator PCBD1. In Pongo abelii (Sumatran orangutan), this protein is Hepatocyte nuclear factor 1-beta (HNF1B).